The chain runs to 610 residues: Replication factor C large subunit (610 aa).

55–62 (GPAGIGKT) lines the ATP pocket. Basic and acidic residues-rich tracts occupy residues 467 to 478 (EKEGNASAEKPE), 502 to 515 (LPEK…KLPE), and 594 to 603 (DGSKKAEPKN). A disordered region spans residues 467–610 (EKEGNASAEK…PKNQKTLFDF (144 aa)).

Belongs to the activator 1 small subunits family. RfcL subfamily. Heteromultimer composed of small subunits (RfcS) and large subunits (RfcL).

Functionally, part of the RFC clamp loader complex which loads the PCNA sliding clamp onto DNA. The chain is Replication factor C large subunit from Methanosarcina mazei (strain ATCC BAA-159 / DSM 3647 / Goe1 / Go1 / JCM 11833 / OCM 88) (Methanosarcina frisia).